Consider the following 249-residue polypeptide: tRNA (guanine-N(7)-)-methyltransferase (249 aa).

Residues Glu-80, Glu-105, Asp-132, and Asp-155 each coordinate S-adenosyl-L-methionine. The active site involves Asp-155. Substrate is bound by residues Lys-159, Asp-191, and 228–231; that span reads TKFE.

Belongs to the class I-like SAM-binding methyltransferase superfamily. TrmB family.

The enzyme catalyses guanosine(46) in tRNA + S-adenosyl-L-methionine = N(7)-methylguanosine(46) in tRNA + S-adenosyl-L-homocysteine. It participates in tRNA modification; N(7)-methylguanine-tRNA biosynthesis. Functionally, catalyzes the formation of N(7)-methylguanine at position 46 (m7G46) in tRNA. This chain is tRNA (guanine-N(7)-)-methyltransferase, found in Mannheimia succiniciproducens (strain KCTC 0769BP / MBEL55E).